A 537-amino-acid polypeptide reads, in one-letter code: CTP synthase (537 aa).

The tract at residues 1 to 267 is amidoligase domain; sequence MAKYIFVTGG…DEYVIKRLNL (267 aa). Residue serine 13 participates in CTP binding. Serine 13 is a UTP binding site. 14 to 19 provides a ligand contact to ATP; it reads SLGKGI. Tyrosine 54 serves as a coordination point for L-glutamine. Residue aspartate 71 participates in ATP binding. Positions 71 and 141 each coordinate Mg(2+). CTP contacts are provided by residues 148-150, 188-193, and lysine 224; these read DIE and KTKPTQ. UTP contacts are provided by residues 188–193 and lysine 224; that span reads KTKPTQ. 240-242 contacts ATP; that stretch reads RDV. Residues 292–534 enclose the Glutamine amidotransferase type-1 domain; sequence EVALVGKYVD…VKAMLNLKIN (243 aa). Glycine 354 lines the L-glutamine pocket. The Nucleophile; for glutamine hydrolysis role is filled by cysteine 381. L-glutamine contacts are provided by residues 382–385, glutamate 405, and arginine 462; that span reads LGMQ. Active-site residues include histidine 507 and glutamate 509.

This sequence belongs to the CTP synthase family. As to quaternary structure, homotetramer.

It catalyses the reaction UTP + L-glutamine + ATP + H2O = CTP + L-glutamate + ADP + phosphate + 2 H(+). The catalysed reaction is L-glutamine + H2O = L-glutamate + NH4(+). It carries out the reaction UTP + NH4(+) + ATP = CTP + ADP + phosphate + 2 H(+). It participates in pyrimidine metabolism; CTP biosynthesis via de novo pathway; CTP from UDP: step 2/2. Its activity is regulated as follows. Allosterically activated by GTP, when glutamine is the substrate; GTP has no effect on the reaction when ammonia is the substrate. The allosteric effector GTP functions by stabilizing the protein conformation that binds the tetrahedral intermediate(s) formed during glutamine hydrolysis. Inhibited by the product CTP, via allosteric rather than competitive inhibition. Its function is as follows. Catalyzes the ATP-dependent amination of UTP to CTP with either L-glutamine or ammonia as the source of nitrogen. Regulates intracellular CTP levels through interactions with the four ribonucleotide triphosphates. The protein is CTP synthase of Caldanaerobacter subterraneus subsp. tengcongensis (strain DSM 15242 / JCM 11007 / NBRC 100824 / MB4) (Thermoanaerobacter tengcongensis).